The primary structure comprises 106 residues: Biogenesis of lysosome-related organelles complex 1 subunit 6 (106 aa).

Residues 78 to 106 form a disordered region; the sequence is KKTSQLELSDTNIEDGSTTSTPTTTNKSQ. Residues 82–93 show a composition bias toward polar residues; sequence QLELSDTNIEDG. Residues 94–106 show a composition bias toward low complexity; that stretch reads STTSTPTTTNKSQ.

The protein belongs to the BLOC1S6 family. As to quaternary structure, homodimer (isoform 1). Component of the biogenesis of lysosome-related organelles complex-1 (BLOC-1) composed at least of blos-1, blos-2, blos-4, dsbn-1, glo-2, mutd-1 and snpn-1. Isoform 1 interacts with blos-1 and blos-4.

It localises to the cytoplasm. The protein localises to the endosome. In terms of biological role, component of the biogenesis of lysosome-related organelles complex-1 (BLOC-1) involved in gut granule biogenesis. The polypeptide is Biogenesis of lysosome-related organelles complex 1 subunit 6 (glo-2) (Caenorhabditis elegans).